The primary structure comprises 181 residues: Large ribosomal subunit protein uL30 (181 aa).

This sequence belongs to the universal ribosomal protein uL30 family. In terms of assembly, part of the 50S ribosomal subunit.

In Hyperthermus butylicus (strain DSM 5456 / JCM 9403 / PLM1-5), this protein is Large ribosomal subunit protein uL30.